A 147-amino-acid chain; its full sequence is Large ribosomal subunit protein bL21 (147 aa).

The segment at 125 to 147 is disordered; the sequence is EEVEAAPKAKKAAPKAKKEATKE.

The protein belongs to the bacterial ribosomal protein bL21 family. As to quaternary structure, part of the 50S ribosomal subunit. Contacts protein L20.

Its function is as follows. This protein binds to 23S rRNA in the presence of protein L20. The chain is Large ribosomal subunit protein bL21 from Flavobacterium johnsoniae (strain ATCC 17061 / DSM 2064 / JCM 8514 / BCRC 14874 / CCUG 350202 / NBRC 14942 / NCIMB 11054 / UW101) (Cytophaga johnsonae).